The chain runs to 121 residues: Large ribosomal subunit protein uL14c (121 aa).

This sequence belongs to the universal ribosomal protein uL14 family. Part of the 50S ribosomal subunit.

The protein resides in the plastid. The protein localises to the chloroplast. Binds to 23S rRNA. The sequence is that of Large ribosomal subunit protein uL14c from Tetradesmus obliquus (Green alga).